Reading from the N-terminus, the 179-residue chain is Large ribosomal subunit protein uL6c (179 aa).

The protein belongs to the universal ribosomal protein uL6 family. As to quaternary structure, part of the 50S ribosomal subunit.

The protein localises to the plastid. It is found in the cyanelle. Its function is as follows. Binds 23S rRNA. The protein is Large ribosomal subunit protein uL6c (rpl6) of Cyanophora paradoxa.